Here is a 346-residue protein sequence, read N- to C-terminus: Sensor histidine kinase GraS (346 aa).

2 helical membrane passes run 15–35 (MNWI…SLID) and 43–63 (LFYI…LTYF). The Histidine kinase domain maps to 126–332 (EFVHDIKTPV…TVRLIFPLQN (207 aa)).

Interacts with GraX.

Its subcellular location is the cell membrane. It catalyses the reaction ATP + protein L-histidine = ADP + protein N-phospho-L-histidine.. Member of the two-component regulatory system GraR/GraS involved in resistance against cationic antimicrobial peptides (CAMPs). Functions as a sensor protein kinase which phosphorylates GraR through the auxiliary protein GraX. In turn, GraR up-regulates many genes such as adhesins, exoproteins, transporters, toxins, and proteins involved in cell wall synthesis. Down-regulates the expression of many genes involved in RNA and amino acid synthesis or glycolysis. This Staphylococcus aureus (strain Mu50 / ATCC 700699) protein is Sensor histidine kinase GraS (graS).